The chain runs to 734 residues: MALRFPRFSQGLAQDPTTRRIWFGIATAHDFESHDDITEERLYQNIFASHFGQLAIIFLWTSGNLFHVAWQGNFESWVQDPLHVRPIAHAIWDPHFGQPAVEAFTRGGALGPVNIAYSGVYQWWYTIGLRTNEDLYTGALFLLFLSAISLIAGWLHLQPKWKPSVSWFKNAESRLNHHLSGLFGVSSLAWTGHLVHVAIPGSRGEYVRWNNFLDVLPYPQGLGPLFTGQWNLYAQNPDSSSHLFGTSQGAGTAILTLLGGFHPQTQSLWLTDIAHHHLAIAFLFLVAGHMYRTNFGIGHSMKDLLEAHTPPGGRLGRGHKGLYDTINNSIHFQLGLALASLGVITSLVAQHMYSLPAYAFIAQDFTTQAALYTHHQYIAGFIMTGAFAHGAIFFIRDYNPEQNEDNVLARMLDHKEAIKSHLSWVSLFLGFHTLGLYVHNDVMLAFGTPEKQILIEPIFAQWIQSAHGKTSYGFDVLLSSTNGPAFNAGRSIWLPGWLNAVNENSNSLFLTIGPGDFLVHHAIALGLHTTTLILVKGALDARGSKLMPDKKDFGYSFPCDGPGRGGTCDISAWDAFYLAVFWMLNTIGWVTFYWHWKHITLWQGNVSQFNESSTYLMGWLRDYLWLNSSQLINGYNPFGMNSLSVWAWMFLFGHLVWATGFMFLISWRGYWQELIETLAWAHERTPLANLIRWRDKPVALSIVQARLVGLAHFSVGYIFTYAAFLIASTSGKFG.

8 helical membrane-spanning segments follow: residues 46-69, 135-158, 175-199, 273-291, 330-353, 369-395, 417-439, and 517-535; these read IFASHFGQLAIIFLWTSGNLFHVA, LYTGALFLLFLSAISLIAGWLHLQ, LNHHLSGLFGVSSLAWTGHLVHVAI, IAHHHLAIAFLFLVAGHMY, IHFQLGLALASLGVITSLVAQHMY, AALYTHHQYIAGFIMTGAFAHGAIFFI, AIKSHLSWVSLFLGFHTLGLYVH, and FLVHHAIALGLHTTTLILV. Cys-559 and Cys-568 together coordinate [4Fe-4S] cluster. 2 helical membrane-spanning segments follow: residues 575–596 and 643–665; these read AFYLAVFWMLNTIGWVTFYWHW and LSVWAWMFLFGHLVWATGFMFLI. Residues His-654, Met-662, and Tyr-670 each contribute to the chlorophyll a site. Position 671 (Trp-671) interacts with phylloquinone. Residues 707 to 727 traverse the membrane as a helical segment; the sequence is LVGLAHFSVGYIFTYAAFLIA.

The protein belongs to the PsaA/PsaB family. The PsaA/B heterodimer binds the P700 chlorophyll special pair and subsequent electron acceptors. PSI consists of a core antenna complex that captures photons, and an electron transfer chain that converts photonic excitation into a charge separation. The eukaryotic PSI reaction center is composed of at least 11 subunits. P700 is a chlorophyll a/chlorophyll a' dimer, A0 is one or more chlorophyll a, A1 is one or both phylloquinones and FX is a shared 4Fe-4S iron-sulfur center. serves as cofactor.

It is found in the plastid. Its subcellular location is the chloroplast thylakoid membrane. It carries out the reaction reduced [plastocyanin] + hnu + oxidized [2Fe-2S]-[ferredoxin] = oxidized [plastocyanin] + reduced [2Fe-2S]-[ferredoxin]. In terms of biological role, psaA and PsaB bind P700, the primary electron donor of photosystem I (PSI), as well as the electron acceptors A0, A1 and FX. PSI is a plastocyanin-ferredoxin oxidoreductase, converting photonic excitation into a charge separation, which transfers an electron from the donor P700 chlorophyll pair to the spectroscopically characterized acceptors A0, A1, FX, FA and FB in turn. Oxidized P700 is reduced on the lumenal side of the thylakoid membrane by plastocyanin. The sequence is that of Photosystem I P700 chlorophyll a apoprotein A2 from Drimys granadensis.